A 139-amino-acid chain; its full sequence is Single-stranded DNA-binding protein 2 (139 aa).

Positions 1-104 constitute an SSB domain; sequence MLNRTVLVGR…VVADSVQFLE (104 aa). Residues 103-139 are disordered; sequence LEPKNNNKQNNQQHNGQTQTGNNPFDNTEEDFSDLPF. Positions 106-125 are enriched in low complexity; that stretch reads KNNNKQNNQQHNGQTQTGNN. Residues 129-139 are compositionally biased toward acidic residues; the sequence is NTEEDFSDLPF.

As to quaternary structure, homotetramer.

This Staphylococcus aureus (strain COL) protein is Single-stranded DNA-binding protein 2 (ssb-p).